A 173-amino-acid polypeptide reads, in one-letter code: Co-chaperone protein HscB (173 aa).

Residues 2–74 (DYFTLLGMPN…LSRAEYMLSL (73 aa)) form the J domain.

This sequence belongs to the HscB family. In terms of assembly, interacts with HscA and stimulates its ATPase activity. Interacts with IscU.

Its function is as follows. Co-chaperone involved in the maturation of iron-sulfur cluster-containing proteins. Seems to help targeting proteins to be folded toward HscA. The protein is Co-chaperone protein HscB of Proteus mirabilis (strain HI4320).